Reading from the N-terminus, the 416-residue chain is Lipid phosphate phosphatase delta (416 aa).

The next 2 helical transmembrane spans lie at 72 to 92 (FFSGLSCVVSVPFYTAFLPLL) and 104 to 124 (MTLLIAFCDYLGNCIKDVVSA). A phosphatase sequence motif I region spans residues 119–127 (KDVVSAPRP). The interval 151–154 (PSSH) is phosphatase sequence motif II. The Proton donor role is filled by histidine 154. Residues 178-198 (VSIQYYGFALACLLVALIAFG) form a helical membrane-spanning segment. Residues 198–209 (GRVYLGMHSVVD) form a phosphatase sequence motif III region. Histidine 205 (nucleophile) is an active-site residue. 5 helical membrane-spanning segments follow: residues 207-227 (VVDIVSGLAIGVLILGLWLTV), 241-261 (VSSFWTALSFLLLFAYPTPEH), 266-286 (YEYHTAFNGVTLGIVTGVQQT), 302-322 (ELPISSYLGRVMVGIPTILLV), and 393-413 (FFQYAGLAWSVVDLVPSLFSY).

Belongs to the type 2 lipid phosphate phosphatase family.

Its subcellular location is the endoplasmic reticulum membrane. Functions as a sphingoid long-chain base phosphate (LCBP) phosphatase. May play a role in the regulation of LCBP levels and be involved in stomatal responses through LCBP-mediated ABA signaling. This chain is Lipid phosphate phosphatase delta (LPPD), found in Arabidopsis thaliana (Mouse-ear cress).